Consider the following 306-residue polypeptide: Acetyl-coenzyme A carboxylase carboxyl transferase subunit beta (306 aa).

One can recognise a CoA carboxyltransferase N-terminal domain in the interval 27–296; the sequence is LWHKCPSCDA…PRFVAPVIEP (270 aa). Zn(2+) contacts are provided by Cys-31, Cys-34, Cys-50, and Cys-53. The segment at 31-53 adopts a C4-type zinc-finger fold; it reads CPSCDAVLYRPELEKTLDVCPKC.

It belongs to the AccD/PCCB family. In terms of assembly, acetyl-CoA carboxylase is a heterohexamer composed of biotin carboxyl carrier protein (AccB), biotin carboxylase (AccC) and two subunits each of ACCase subunit alpha (AccA) and ACCase subunit beta (AccD). Zn(2+) serves as cofactor.

Its subcellular location is the cytoplasm. It carries out the reaction N(6)-carboxybiotinyl-L-lysyl-[protein] + acetyl-CoA = N(6)-biotinyl-L-lysyl-[protein] + malonyl-CoA. It functions in the pathway lipid metabolism; malonyl-CoA biosynthesis; malonyl-CoA from acetyl-CoA: step 1/1. In terms of biological role, component of the acetyl coenzyme A carboxylase (ACC) complex. Biotin carboxylase (BC) catalyzes the carboxylation of biotin on its carrier protein (BCCP) and then the CO(2) group is transferred by the transcarboxylase to acetyl-CoA to form malonyl-CoA. This is Acetyl-coenzyme A carboxylase carboxyl transferase subunit beta from Pseudomonas syringae pv. tomato (strain ATCC BAA-871 / DC3000).